Here is a 307-residue protein sequence, read N- to C-terminus: Ornithine carbamoyltransferase (307 aa).

Residues 56-59 (STRT), glutamine 83, arginine 107, and 134-137 (HPCQ) contribute to the carbamoyl phosphate site. Residues asparagine 165, aspartate 223, and 227–228 (SM) each bind L-ornithine. Residues 263 to 264 (CL) and arginine 291 each bind carbamoyl phosphate.

The protein belongs to the aspartate/ornithine carbamoyltransferase superfamily. OTCase family.

It is found in the cytoplasm. The enzyme catalyses carbamoyl phosphate + L-ornithine = L-citrulline + phosphate + H(+). It participates in amino-acid degradation; L-arginine degradation via ADI pathway; carbamoyl phosphate from L-arginine: step 2/2. Functionally, reversibly catalyzes the transfer of the carbamoyl group from carbamoyl phosphate (CP) to the N(epsilon) atom of ornithine (ORN) to produce L-citrulline. In Cupriavidus taiwanensis (strain DSM 17343 / BCRC 17206 / CCUG 44338 / CIP 107171 / LMG 19424 / R1) (Ralstonia taiwanensis (strain LMG 19424)), this protein is Ornithine carbamoyltransferase.